Reading from the N-terminus, the 362-residue chain is Type II methyltransferase M.MamI (362 aa).

This sequence belongs to the N(4)/N(6)-methyltransferase family.

It catalyses the reaction a 2'-deoxyadenosine in DNA + S-adenosyl-L-methionine = an N(6)-methyl-2'-deoxyadenosine in DNA + S-adenosyl-L-homocysteine + H(+). A gamma subtype methylase that recognizes the double-stranded sequence 5'-GATNNNNATC-3', methylates A-? on both strands, and protects the DNA from cleavage by the MamI endonuclease. This is Type II methyltransferase M.MamI from Microbacterium ammoniaphilum.